The chain runs to 383 residues: Chaperone protein DnaJ (383 aa).

The J domain occupies 5-70 (DYYKTLGVTQ…KKRTAYDQYG (66 aa)). The segment at 137-215 (GTIKEIKIPT…CHGNGRIEIS (79 aa)) adopts a CR-type zinc-finger fold. Residues cysteine 150, cysteine 153, cysteine 167, cysteine 170, cysteine 189, cysteine 192, cysteine 203, and cysteine 206 each contribute to the Zn(2+) site. CXXCXGXG motif repeat units follow at residues 150 to 157 (CPTCYGYG), 167 to 174 (CPTCRGNG), 189 to 196 (CPQCHGEG), and 203 to 210 (CRRCHGNG).

It belongs to the DnaJ family. Homodimer. Zn(2+) serves as cofactor.

It is found in the cytoplasm. Its function is as follows. Participates actively in the response to hyperosmotic and heat shock by preventing the aggregation of stress-denatured proteins and by disaggregating proteins, also in an autonomous, DnaK-independent fashion. Unfolded proteins bind initially to DnaJ; upon interaction with the DnaJ-bound protein, DnaK hydrolyzes its bound ATP, resulting in the formation of a stable complex. GrpE releases ADP from DnaK; ATP binding to DnaK triggers the release of the substrate protein, thus completing the reaction cycle. Several rounds of ATP-dependent interactions between DnaJ, DnaK and GrpE are required for fully efficient folding. Also involved, together with DnaK and GrpE, in the DNA replication of plasmids through activation of initiation proteins. The protein is Chaperone protein DnaJ of Buchnera aphidicola subsp. Baizongia pistaciae (strain Bp).